The sequence spans 95 residues: Ragulator complex protein LAMTOR4 homolog (95 aa).

This sequence belongs to the LAMTOR4 family. Part of the Ragulator complex.

Its subcellular location is the lysosome. Functionally, regulator of the TOR pathway, a signaling cascade that promotes cell growth in response to growth factors, energy levels, and amino acids. As part of the Ragulator complex, may activate the TOR signaling cascade in response to amino acids. The polypeptide is Ragulator complex protein LAMTOR4 homolog (Nematostella vectensis (Starlet sea anemone)).